Here is a 475-residue protein sequence, read N- to C-terminus: Ankyrin repeat, SAM and basic leucine zipper domain-containing protein 1 (475 aa).

The segment at 1–24 (MAAGPLRGLAVAGGGESSESEDDG) is disordered. 3 positions are modified to phosphoserine: S17, S18, and S20. 6 ANK repeats span residues 45-74 (ERQE…SVDT), 78-107 (YGWT…NASF), 110-144 (DKQT…DPNV), 148-177 (RLMT…EVNT), 181-210 (NGYT…NKMI), and 214-243 (DGKT…PLEG). The SAM domain maps to 272 to 334 (SYTAFGDLEI…KIMAALKELE (63 aa)).

In terms of assembly, interacts with DDX4, PIWIL1, RANBP9 and TDRD1.

Its subcellular location is the cytoplasm. Its function is as follows. Plays a central role during spermatogenesis by repressing transposable elements and preventing their mobilization, which is essential for the germline integrity. Acts via the piRNA metabolic process, which mediates the repression of transposable elements during meiosis by forming complexes composed of piRNAs and Piwi proteins and governs the methylation and subsequent repression of transposons. Its association with pi-bodies suggests a participation in the primary piRNAs metabolic process. Required prior to the pachytene stage to facilitate the production of multiple types of piRNAs, including those associated with repeats involved in the regulation of retrotransposons. May act by mediating protein-protein interactions during germ cell maturation. The protein is Ankyrin repeat, SAM and basic leucine zipper domain-containing protein 1 (ASZ1) of Ovis aries (Sheep).